The chain runs to 69 residues: DNA gyrase inhibitor YacG (69 aa).

Positions 7, 10, 26, and 30 each coordinate Zn(2+).

This sequence belongs to the DNA gyrase inhibitor YacG family. Interacts with GyrB. Zn(2+) serves as cofactor.

Functionally, inhibits all the catalytic activities of DNA gyrase by preventing its interaction with DNA. Acts by binding directly to the C-terminal domain of GyrB, which probably disrupts DNA binding by the gyrase. In Shewanella baltica (strain OS223), this protein is DNA gyrase inhibitor YacG.